Reading from the N-terminus, the 439-residue chain is MYKQNLFIISSNDSKYNFLLRNKKLYYEIILEGLTFILEFFFFIRLISYLEGKKNKIEKLNNLRSILSIFPFLEDNFSNLKFILDILIPRKVHAEILVQTLRYWIKDATYLHLLRFWLNNNWNSIINQNKDGYFYPQKNKILLLLYNSYVCKYESIFVFLRNQSYHFRSTPFIMLLERIYFYFKIERLVNPFLKVKDFKANLWLIKEPCLHYFRYRRQYILASKGTSLFLNKWKCYVITFWQWYFSLWFFSRSIYIKKLLNNSFEILTYHSSLNINPSFVLSQILETPFISNNTIKKVNILVPIILSISDKEKFFNVLGHPTSNLFRVDLSDYNIIGRLECIYRNLYHYLSGSSKKNSLYLIKYILLLSCVRTLARKHKSTVRTFAFQKKRLCLELLEGFFISEEDILFLKFQKVYSSLGGVYISQFWYLNIYSINYLA.

This sequence belongs to the intron maturase 2 family. MatK subfamily.

It localises to the plastid. Functionally, usually encoded in the trnK tRNA gene intron. Its retention as a freestanding gene in this organism suggests it acts in trans to assist in splicing chloroplast group II introns. The protein is Maturase K (matK) of Epifagus virginiana (Beechdrops).